Consider the following 545-residue polypeptide: External NADH-ubiquinone oxidoreductase 2, mitochondrial (545 aa).

The transit peptide at 1–21 (MLPRLGFARTARSIHRFKMTQ) directs the protein to the mitochondrion. 99–129 (ELVILGTGWGAISLLKKLDTSLYNVTVVSPR) contributes to the FAD binding site. NAD(+) is bound at residue 260–296 (LTFVVVGGGPTGVEFAAELQDYINQDLRKWMPDLSKE).

This sequence belongs to the NADH dehydrogenase family.

The protein resides in the mitochondrion intermembrane space. The enzyme catalyses a quinone + NADH + H(+) = a quinol + NAD(+). It catalyses the reaction a ubiquinone + NADH + H(+) = a ubiquinol + NAD(+). Functionally, external NADH dehydrogenase required for optimum cellular growth with a number of nonfermentable carbon sources, including ethanol. With NDE1, performes the mitochondrial oxidation of cytosolic NADH under these growth conditions. Regulates the mitochondrial glycerol-3-phosphate dehydrogenase, GUT2, also involved in cytosolic NADH oxidation. In Saccharomyces cerevisiae (strain ATCC 204508 / S288c) (Baker's yeast), this protein is External NADH-ubiquinone oxidoreductase 2, mitochondrial (NDE2).